The following is a 421-amino-acid chain: Glutamyl-tRNA reductase (421 aa).

Substrate-binding positions include 49–52, Ser109, 114–116, and Gln120; these read TCNR and EAQ. The active-site Nucleophile is Cys50. NADP(+) is bound at residue 189–194; it reads GAGEMC.

It belongs to the glutamyl-tRNA reductase family. In terms of assembly, homodimer.

The enzyme catalyses (S)-4-amino-5-oxopentanoate + tRNA(Glu) + NADP(+) = L-glutamyl-tRNA(Glu) + NADPH + H(+). The protein operates within porphyrin-containing compound metabolism; protoporphyrin-IX biosynthesis; 5-aminolevulinate from L-glutamyl-tRNA(Glu): step 1/2. Catalyzes the NADPH-dependent reduction of glutamyl-tRNA(Glu) to glutamate 1-semialdehyde (GSA). This is Glutamyl-tRNA reductase from Magnetococcus marinus (strain ATCC BAA-1437 / JCM 17883 / MC-1).